The primary structure comprises 474 residues: 3-isopropylmalate dehydratase large subunit (474 aa).

Residues cysteine 353, cysteine 414, and cysteine 417 each coordinate [4Fe-4S] cluster.

Belongs to the aconitase/IPM isomerase family. LeuC type 1 subfamily. Heterodimer of LeuC and LeuD. [4Fe-4S] cluster is required as a cofactor.

It carries out the reaction (2R,3S)-3-isopropylmalate = (2S)-2-isopropylmalate. It functions in the pathway amino-acid biosynthesis; L-leucine biosynthesis; L-leucine from 3-methyl-2-oxobutanoate: step 2/4. Its function is as follows. Catalyzes the isomerization between 2-isopropylmalate and 3-isopropylmalate, via the formation of 2-isopropylmaleate. In Xylella fastidiosa (strain M23), this protein is 3-isopropylmalate dehydratase large subunit.